The chain runs to 462 residues: Putative amidase AmiB2 (462 aa).

Active-site charge relay system residues include Lys81 and Ser155. Catalysis depends on Ser179, which acts as the Acyl-ester intermediate.

Belongs to the amidase family.

The catalysed reaction is a monocarboxylic acid amide + H2O = a monocarboxylate + NH4(+). This Mycobacterium bovis (strain ATCC BAA-935 / AF2122/97) protein is Putative amidase AmiB2 (amiB2).